The chain runs to 393 residues: Formate-dependent phosphoribosylglycinamide formyltransferase (393 aa).

N(1)-(5-phospho-beta-D-ribosyl)glycinamide is bound by residues 22-23 (EL) and glutamate 82. ATP-binding positions include arginine 114, lysine 155, 160-165 (SSGKGQ), 195-198 (EGLV), and glutamate 203. Positions 119–308 (RLAAETLQLP…EFALHVRAFL (190 aa)) constitute an ATP-grasp domain. 2 residues coordinate Mg(2+): glutamate 267 and glutamate 279. Residues aspartate 286, lysine 355, and 362 to 363 (RR) contribute to the N(1)-(5-phospho-beta-D-ribosyl)glycinamide site.

It belongs to the PurK/PurT family. In terms of assembly, homodimer.

The enzyme catalyses N(1)-(5-phospho-beta-D-ribosyl)glycinamide + formate + ATP = N(2)-formyl-N(1)-(5-phospho-beta-D-ribosyl)glycinamide + ADP + phosphate + H(+). The protein operates within purine metabolism; IMP biosynthesis via de novo pathway; N(2)-formyl-N(1)-(5-phospho-D-ribosyl)glycinamide from N(1)-(5-phospho-D-ribosyl)glycinamide (formate route): step 1/1. Its function is as follows. Involved in the de novo purine biosynthesis. Catalyzes the transfer of formate to 5-phospho-ribosyl-glycinamide (GAR), producing 5-phospho-ribosyl-N-formylglycinamide (FGAR). Formate is provided by PurU via hydrolysis of 10-formyl-tetrahydrofolate. The protein is Formate-dependent phosphoribosylglycinamide formyltransferase of Yersinia pseudotuberculosis serotype O:3 (strain YPIII).